The chain runs to 425 residues: GTPase Obg (425 aa).

Residues 1–158 (MFKDYAKIHV…LWLELELKLL (158 aa)) form the Obg domain. The region spanning 159–329 (ADVGLVGFPN…LIYRTYRLLE (171 aa)) is the OBG-type G domain. GTP-binding positions include 165-172 (GFPNAGKS), 190-194 (FTTLE), 212-215 (DIPG), 282-285 (NKTD), and 310-312 (SAL). Mg(2+) contacts are provided by S172 and T192. One can recognise an OCT domain in the interval 341 to 421 (VPDERETDVT…IGRFEFEYSE (81 aa)).

The protein belongs to the TRAFAC class OBG-HflX-like GTPase superfamily. OBG GTPase family. In terms of assembly, monomer. Mg(2+) serves as cofactor.

It localises to the cytoplasm. Its function is as follows. An essential GTPase which binds GTP, GDP and possibly (p)ppGpp with moderate affinity, with high nucleotide exchange rates and a fairly low GTP hydrolysis rate. Plays a role in control of the cell cycle, stress response, ribosome biogenesis and in those bacteria that undergo differentiation, in morphogenesis control. The chain is GTPase Obg from Desulforudis audaxviator (strain MP104C).